A 42-amino-acid polypeptide reads, in one-letter code: Large ribosomal subunit protein bL36 (42 aa).

The protein belongs to the bacterial ribosomal protein bL36 family.

The protein is Large ribosomal subunit protein bL36 of Ehrlichia ruminantium (strain Gardel).